The sequence spans 157 residues: SsrA-binding protein (157 aa).

This sequence belongs to the SmpB family.

It localises to the cytoplasm. Functionally, required for rescue of stalled ribosomes mediated by trans-translation. Binds to transfer-messenger RNA (tmRNA), required for stable association of tmRNA with ribosomes. tmRNA and SmpB together mimic tRNA shape, replacing the anticodon stem-loop with SmpB. tmRNA is encoded by the ssrA gene; the 2 termini fold to resemble tRNA(Ala) and it encodes a 'tag peptide', a short internal open reading frame. During trans-translation Ala-aminoacylated tmRNA acts like a tRNA, entering the A-site of stalled ribosomes, displacing the stalled mRNA. The ribosome then switches to translate the ORF on the tmRNA; the nascent peptide is terminated with the 'tag peptide' encoded by the tmRNA and targeted for degradation. The ribosome is freed to recommence translation, which seems to be the essential function of trans-translation. This chain is SsrA-binding protein, found in Chlorobium chlorochromatii (strain CaD3).